A 190-amino-acid polypeptide reads, in one-letter code: ATP synthase subunit C lysine N-methyltransferase (190 aa).

It belongs to the ANT/ATPSC lysine N-methyltransferase family.

Its subcellular location is the mitochondrion. The enzyme catalyses L-lysyl-[protein] + 3 S-adenosyl-L-methionine = N(6),N(6),N(6)-trimethyl-L-lysyl-[protein] + 3 S-adenosyl-L-homocysteine + 3 H(+). In terms of biological role, mitochondrial protein-lysine N-methyltransferase that trimethylates ATP synthase subunit C. Trimethylation is required for proper incorporation of the C subunit into the ATP synthase complex and mitochondrial respiration. The sequence is that of ATP synthase subunit C lysine N-methyltransferase from Caenorhabditis elegans.